We begin with the raw amino-acid sequence, 416 residues long: D-amino acid dehydrogenase (416 aa).

3-17 is a binding site for FAD; that stretch reads VVILGAGVIGVTSAW.

This sequence belongs to the DadA oxidoreductase family. FAD is required as a cofactor.

It catalyses the reaction a D-alpha-amino acid + A + H2O = a 2-oxocarboxylate + AH2 + NH4(+). It participates in amino-acid degradation; D-alanine degradation; NH(3) and pyruvate from D-alanine: step 1/1. Oxidative deamination of D-amino acids. The protein is D-amino acid dehydrogenase of Rhizorhabdus wittichii (strain DSM 6014 / CCUG 31198 / JCM 15750 / NBRC 105917 / EY 4224 / RW1) (Sphingomonas wittichii).